Reading from the N-terminus, the 265-residue chain is Hydroxyethylthiazole kinase (265 aa).

Position 50 (methionine 50) interacts with substrate. Residues arginine 125 and threonine 171 each contribute to the ATP site. Glycine 198 is a substrate binding site.

This sequence belongs to the Thz kinase family. It depends on Mg(2+) as a cofactor.

The catalysed reaction is 5-(2-hydroxyethyl)-4-methylthiazole + ATP = 4-methyl-5-(2-phosphooxyethyl)-thiazole + ADP + H(+). The protein operates within cofactor biosynthesis; thiamine diphosphate biosynthesis; 4-methyl-5-(2-phosphoethyl)-thiazole from 5-(2-hydroxyethyl)-4-methylthiazole: step 1/1. Catalyzes the phosphorylation of the hydroxyl group of 4-methyl-5-beta-hydroxyethylthiazole (THZ). In Salmonella choleraesuis (strain SC-B67), this protein is Hydroxyethylthiazole kinase.